A 196-amino-acid polypeptide reads, in one-letter code: GTP cyclohydrolase 1 (196 aa).

Zn(2+) contacts are provided by cysteine 85, histidine 88, and cysteine 158.

The protein belongs to the GTP cyclohydrolase I family. Homomer.

The enzyme catalyses GTP + H2O = 7,8-dihydroneopterin 3'-triphosphate + formate + H(+). It functions in the pathway cofactor biosynthesis; 7,8-dihydroneopterin triphosphate biosynthesis; 7,8-dihydroneopterin triphosphate from GTP: step 1/1. The polypeptide is GTP cyclohydrolase 1 (Corynebacterium aurimucosum (strain ATCC 700975 / DSM 44827 / CIP 107346 / CN-1) (Corynebacterium nigricans)).